The following is a 232-amino-acid chain: UPF0758 protein FN0909 (232 aa).

The MPN domain occupies 110–232 (KISNKDILLK…YFSFLEEGLI (123 aa)). Residues His-181, His-183, and Asp-194 each contribute to the Zn(2+) site. Residues 181–194 (HNHPSDNITPSKSD) carry the JAMM motif motif.

The protein belongs to the UPF0758 family.

In Fusobacterium nucleatum subsp. nucleatum (strain ATCC 25586 / DSM 15643 / BCRC 10681 / CIP 101130 / JCM 8532 / KCTC 2640 / LMG 13131 / VPI 4355), this protein is UPF0758 protein FN0909.